A 290-amino-acid polypeptide reads, in one-letter code: GTPase Era (290 aa).

Residues 2-144 (KVLKVGVLGP…AIILEEFKPQ (143 aa)) form the Era-type G domain. Residues 10–17 (GPTNAGKS) are G1. GTP is bound at residue 10-17 (GPTNAGKS). The G2 stretch occupies residues 36-40 (NTTLL). The G3 stretch occupies residues 58 to 61 (DVPG). 58–62 (DVPGF) lines the GTP pocket. Residues 97 to 100 (NKIE) are G4. Positions 121–123 (INK) are G5. 122–125 (NKFH) is a GTP binding site. The KH type-2 domain maps to 201–279 (CKNEIPHIAR…FIDIFVKTEK (79 aa)).

It belongs to the TRAFAC class TrmE-Era-EngA-EngB-Septin-like GTPase superfamily. Era GTPase family. Monomer.

It is found in the cytoplasm. Its subcellular location is the cell membrane. In terms of biological role, an essential GTPase that binds both GDP and GTP, with rapid nucleotide exchange. Plays a role in 16S rRNA processing and 30S ribosomal subunit biogenesis and possibly also in cell cycle regulation and energy metabolism. The sequence is that of GTPase Era from Mycoplasma genitalium (strain ATCC 33530 / DSM 19775 / NCTC 10195 / G37) (Mycoplasmoides genitalium).